A 562-amino-acid chain; its full sequence is Formate--tetrahydrofolate ligase (562 aa).

71-78 provides a ligand contact to ATP; the sequence is TPAGEGKS.

It belongs to the formate--tetrahydrofolate ligase family.

The catalysed reaction is (6S)-5,6,7,8-tetrahydrofolate + formate + ATP = (6R)-10-formyltetrahydrofolate + ADP + phosphate. Its pathway is one-carbon metabolism; tetrahydrofolate interconversion. The protein is Formate--tetrahydrofolate ligase of Bacillus thuringiensis (strain Al Hakam).